The sequence spans 276 residues: Diaminopimelate epimerase (276 aa).

Positions 13, 46, and 66 each coordinate substrate. Cys-75 functions as the Proton donor in the catalytic mechanism. Substrate is bound by residues 76–77 (GN), Asn-159, Asn-192, and 210–211 (ER). Cys-219 acts as the Proton acceptor in catalysis. A substrate-binding site is contributed by 220–221 (GT).

It belongs to the diaminopimelate epimerase family. As to quaternary structure, homodimer.

Its subcellular location is the cytoplasm. It carries out the reaction (2S,6S)-2,6-diaminopimelate = meso-2,6-diaminopimelate. It participates in amino-acid biosynthesis; L-lysine biosynthesis via DAP pathway; DL-2,6-diaminopimelate from LL-2,6-diaminopimelate: step 1/1. Functionally, catalyzes the stereoinversion of LL-2,6-diaminopimelate (L,L-DAP) to meso-diaminopimelate (meso-DAP), a precursor of L-lysine and an essential component of the bacterial peptidoglycan. The protein is Diaminopimelate epimerase of Tolumonas auensis (strain DSM 9187 / NBRC 110442 / TA 4).